Here is a 513-residue protein sequence, read N- to C-terminus: ATP synthase subunit alpha 1 (513 aa).

169-176 (GDRQTGKT) contacts ATP.

Belongs to the ATPase alpha/beta chains family. As to quaternary structure, F-type ATPases have 2 components, CF(1) - the catalytic core - and CF(0) - the membrane proton channel. CF(1) has five subunits: alpha(3), beta(3), gamma(1), delta(1), epsilon(1). CF(0) has three main subunits: a(1), b(2) and c(9-12). The alpha and beta chains form an alternating ring which encloses part of the gamma chain. CF(1) is attached to CF(0) by a central stalk formed by the gamma and epsilon chains, while a peripheral stalk is formed by the delta and b chains.

The protein localises to the cell inner membrane. The enzyme catalyses ATP + H2O + 4 H(+)(in) = ADP + phosphate + 5 H(+)(out). In terms of biological role, produces ATP from ADP in the presence of a proton gradient across the membrane. The alpha chain is a regulatory subunit. This is ATP synthase subunit alpha 1 from Nitrosospira multiformis (strain ATCC 25196 / NCIMB 11849 / C 71).